Consider the following 783-residue polypeptide: Tricorn protease-interacting factor F2 (783 aa).

Substrate is bound by residues Glu-107 and 236 to 240 (GAMEN). His-271 is a binding site for Zn(2+). Glu-272 functions as the Proton acceptor in the catalytic mechanism. Zn(2+)-binding residues include His-275 and Glu-294.

Belongs to the peptidase M1 family. Monomer. Part of the Tricorn proteolytic complex. It depends on Zn(2+) as a cofactor.

Its subcellular location is the cytoplasm. In terms of biological role, proteases F1, F2 and F3 degrade oligopeptides produced by Tricorn (themselves probably produced by the proteasome), yielding free amino acids. This is Tricorn protease-interacting factor F2 (trf2) from Thermoplasma volcanium (strain ATCC 51530 / DSM 4299 / JCM 9571 / NBRC 15438 / GSS1).